We begin with the raw amino-acid sequence, 582 residues long: La-related protein 7 (582 aa).

An N-acetylmethionine modification is found at M1. Residues 1–27 (METESGNQEKVMEEESTEKKKEVEKKK) form a disordered region. Residues 10–25 (KVMEEESTEKKKEVEK) are compositionally biased toward basic and acidic residues. One can recognise an HTH La-type RNA-binding domain in the interval 28–122 (RSRVKQVLAD…KPLGERPKDE (95 aa)). Residues 125-203 (RTVYVELLPK…PRKPGIFPKT (79 aa)) enclose the RRM domain. Disordered stretches follow at residues 188–368 (NPPE…ERHK) and 410–442 (KSESEMETDSGVPQNTGMKNEKTANREECRTQE). Positions 219 to 228 (KKKKKKKGRM) are enriched in basic residues. Positions 229–240 (KKEDNIQAKEEN) are enriched in basic and acidic residues. A Glycyl lysine isopeptide (Lys-Gly) (interchain with G-Cter in SUMO2) cross-link involves residue K237. Residue T257 is modified to Phosphothreonine. Residues S258, S261, S273, S298, S299, and S300 each carry the phosphoserine modification. Basic and acidic residues predominate over residues 316-335 (IQKDIIKEASEASKENRDIE). S337 bears the Phosphoserine mark. A Phosphothreonine modification is found at T338. S351 carries the phosphoserine modification. Positions 354–367 (KTKRKHKKKHKERH) are enriched in basic residues. K410 participates in a covalent cross-link: Glycyl lysine isopeptide (Lys-Gly) (interchain with G-Cter in SUMO2). The span at 428–442 (KNEKTANREECRTQE) shows a compositional bias: basic and acidic residues. One can recognise a xRRM domain in the interval 450–563 (QFVSGVIVKI…TEKLITKAEK (114 aa)).

This sequence belongs to the LARP7 family. Core component of the 7SK RNP complex, at least composed of 7SK RNA, LARP7, MEPCE, HEXIM1 (or HEXIM2) and P-TEFb (composed of CDK9 and CCNT1/cyclin-T1). Interacts with METTL16. Interacts with RBM7; upon genotoxic stress this interaction is enhanced, triggering the release of inactive P-TEFb complex from the core, yielding to P-TEFb complex activation. Associates with box C/D small nucleolar ribonucleoprotein (snoRNP) complexes.

It localises to the nucleus. The protein localises to the nucleoplasm. Its function is as follows. RNA-binding protein that specifically binds distinct small nuclear RNA (snRNAs) and regulates their processing and function. Specifically binds the 7SK snRNA (7SK RNA) and acts as a core component of the 7SK ribonucleoprotein (RNP) complex, thereby acting as a negative regulator of transcription elongation by RNA polymerase II. The 7SK RNP complex sequesters the positive transcription elongation factor b (P-TEFb) in a large inactive 7SK RNP complex preventing RNA polymerase II phosphorylation and subsequent transcriptional elongation. The 7SK RNP complex also promotes snRNA gene transcription by RNA polymerase II via interaction with the little elongation complex (LEC). LARP7 specifically binds to the highly conserved 3'-terminal U-rich stretch of 7SK RNA; on stimulation, remains associated with 7SK RNA, whereas P-TEFb is released from the complex. LARP7 also acts as a regulator of mRNA splicing fidelity by promoting U6 snRNA processing. Specifically binds U6 snRNAs and associates with a subset of box C/D RNP complexes: promotes U6 snRNA 2'-O-methylation by facilitating U6 snRNA loading into box C/D RNP complexes. U6 snRNA 2'-O-methylation is required for mRNA splicing fidelity. Binds U6 snRNAs with a 5'-CAGGG-3' sequence motif. U6 snRNA processing is required for spermatogenesis. This chain is La-related protein 7, found in Homo sapiens (Human).